The primary structure comprises 504 residues: Anaerobic nitric oxide reductase transcription regulator NorR (504 aa).

Asp57 bears the 4-aspartylphosphate mark. The Sigma-54 factor interaction domain occupies 187–416 (MIGLSPGMTQ…LEHAIHRAVV (230 aa)). Residues 215–222 (GETGTGKE) and 278–287 (ADNGTLFLDE) each bind ATP. A DNA-binding region (H-T-H motif) is located at residues 479-498 (WAASARMLETDVANLHRLAK).

Its pathway is nitrogen metabolism; nitric oxide reduction. Functionally, required for the expression of anaerobic nitric oxide (NO) reductase, acts as a transcriptional activator for at least the norVW operon. Activation also requires sigma-54. This is Anaerobic nitric oxide reductase transcription regulator NorR from Escherichia coli O7:K1 (strain IAI39 / ExPEC).